A 347-amino-acid polypeptide reads, in one-letter code: NADH-ubiquinone oxidoreductase chain 2 (347 aa).

A run of 11 helical transmembrane segments spans residues 3-23 (PLIL…VMMS), 25-45 (HWLM…PLLM), 59-79 (YFLT…INLM), 96-116 (IIMT…FWVP), 122-142 (ISLT…LSIL), 148-168 (VINP…GGWG), 178-198 (ILAY…AFNP), 202-222 (LLNL…FMVA), 240-260 (ITTS…LAGF), 276-296 (IILA…YIRL), and 326-346 (LPPL…MILL).

The protein belongs to the complex I subunit 2 family. Core subunit of respiratory chain NADH dehydrogenase (Complex I) which is composed of 45 different subunits. Interacts with TMEM242.

The protein localises to the mitochondrion inner membrane. The catalysed reaction is a ubiquinone + NADH + 5 H(+)(in) = a ubiquinol + NAD(+) + 4 H(+)(out). Its function is as follows. Core subunit of the mitochondrial membrane respiratory chain NADH dehydrogenase (Complex I) which catalyzes electron transfer from NADH through the respiratory chain, using ubiquinone as an electron acceptor. Essential for the catalytic activity and assembly of complex I. The sequence is that of NADH-ubiquinone oxidoreductase chain 2 from Peropteryx kappleri (Greater dog-like bat).